The chain runs to 338 residues: Heme A synthase (338 aa).

5 consecutive transmembrane segments (helical) span residues 6-26 (ITKWLSISCIMVIAMIVIGGI), 93-113 (GRITALIYIVPLIYFYFKGII), 118-138 (IAPYIIALLLLYVQGFMGWYM), 154-174 (LAFHLIIAVIIYHILFYQLIK), and 201-221 (VIYLQIFLGALVAGLDAGLIY). Position 256 (His-256) interacts with heme. A run of 3 helical transmembrane segments spans residues 258-278 (LGGYSVFLVVMALATYLLKIE), 285-305 (IAYFLIIALLMQISTGIITLL), and 308-328 (VPIIIASTHQFFAIVLLSVII). His-316 contributes to the heme binding site.

Belongs to the COX15/CtaA family. Type 2 subfamily. Interacts with CtaB. Heme b is required as a cofactor.

It localises to the cell membrane. It carries out the reaction Fe(II)-heme o + 2 A + H2O = Fe(II)-heme a + 2 AH2. Its pathway is porphyrin-containing compound metabolism; heme A biosynthesis; heme A from heme O: step 1/1. Functionally, catalyzes the conversion of heme O to heme A by two successive hydroxylations of the methyl group at C8. The first hydroxylation forms heme I, the second hydroxylation results in an unstable dihydroxymethyl group, which spontaneously dehydrates, resulting in the formyl group of heme A. This Rickettsia canadensis (strain McKiel) protein is Heme A synthase.